Reading from the N-terminus, the 337-residue chain is Delta-aminolevulinic acid dehydratase (337 aa).

The active-site Schiff-base intermediate with substrate is the lysine 205. 2 residues coordinate 5-aminolevulinate: arginine 215 and lysine 229. A Mg(2+)-binding site is contributed by glutamate 245. Lysine 260 functions as the Schiff-base intermediate with substrate in the catalytic mechanism. 5-aminolevulinate contacts are provided by serine 286 and tyrosine 324.

The protein belongs to the ALAD family. Homooctamer; formed by oligomerization of dimers. The cofactor is Mg(2+).

The enzyme catalyses 2 5-aminolevulinate = porphobilinogen + 2 H2O + H(+). It functions in the pathway porphyrin-containing compound metabolism; protoporphyrin-IX biosynthesis; coproporphyrinogen-III from 5-aminolevulinate: step 1/4. With respect to regulation, stimulated by magnesium ions. Catalyzes an early step in the biosynthesis of tetrapyrroles. Binds two molecules of 5-aminolevulinate per subunit, each at a distinct site, and catalyzes their condensation to form porphobilinogen. In Pseudomonas aeruginosa (strain ATCC 15692 / DSM 22644 / CIP 104116 / JCM 14847 / LMG 12228 / 1C / PRS 101 / PAO1), this protein is Delta-aminolevulinic acid dehydratase (hemB).